A 382-amino-acid chain; its full sequence is MAP kinase-activated protein kinase 3 (382 aa).

Met-1 carries the N-acetylmethionine modification. The interval 1–34 (MDGETAEEQGGPVPPPVAPGGPGLGGAPGGRREP) is disordered. Gly residues predominate over residues 20–29 (GGPGLGGAPG). Residues 44–304 (QLSKQVLGLG…ITQFMNHPWI (261 aa)) enclose the Protein kinase domain. Residues 50-58 (LGLGVNGKV) and Lys-73 contribute to the ATP site. Catalysis depends on Asp-166, which acts as the Proton acceptor. Thr-201 carries the post-translational modification Phosphothreonine; by MAPK14. Ser-251 is modified (phosphoserine; by MAPK14). Residue Ser-307 is modified to Phosphoserine; by autocatalysis. The autoinhibitory helix stretch occupies residues 307 to 343 (SMVVPQTPLHTARVLQEDKDHWDEVKEEMTSALATMR). Thr-313 is modified (phosphothreonine; by MAPK14). A Nuclear export signal (NES) motif is present at residues 335-344 (MTSALATMRV). Residues 345–369 (DYDQVKIKDLKTSNNRLLNKRRKKQ) are p38 MAPK-binding site. 2 consecutive short sequence motifs (bipartite nuclear localization signal) follow at residues 350–353 (KIKD) and 364–368 (KRRKK). Positions 357 to 382 (SNNRLLNKRRKKQAGSSSASQGCNNQ) are disordered. The span at 370 to 382 (AGSSSASQGCNNQ) shows a compositional bias: polar residues.

It belongs to the protein kinase superfamily. CAMK Ser/Thr protein kinase family. As to quaternary structure, heterodimer with p38-alpha/MAPK14. The heterodimer with p38-alpha/MAPK14 forms a stable complex: molecules are positioned 'face to face' so that the ATP-binding sites of both kinases are at the heterodimer interface. Interacts with TCF3 and with polycomb proteins, such as PCH2 and BMI1/PCGF4. In terms of processing, phosphorylated and activated by MAPK1/ERK2 and MAPK3/ERK1. Phosphorylated and activated by MAP kinase p38-alpha/MAPK14 at Thr-201, Ser-251 and Thr-313. In terms of tissue distribution, widely expressed, with a higher expression level observed in heart and skeletal muscle. No expression in brain. Expressed in the retinal pigment epithelium.

The protein localises to the nucleus. It localises to the cytoplasm. It catalyses the reaction L-seryl-[protein] + ATP = O-phospho-L-seryl-[protein] + ADP + H(+). The catalysed reaction is L-threonyl-[protein] + ATP = O-phospho-L-threonyl-[protein] + ADP + H(+). With respect to regulation, activated following phosphorylation by p38-alpha/MAPK14 following various stresses. Inhibited by ligand 5B (2'-[2-(1,3-benzodioxol-5-yl)pyrimidin-4-yl]-5',6'-dihydrospiro[piperidine-4,7'-pyrrolo[3,2-c]pyridin]- 4'(1'h)-one) and ligand P4O (2-[2-(2-fluorophenyl)pyridin-4-yl]-1,5,6,7-tetrahydro- 4h-pyrrolo[3,2-c]pyridin-4-one), 2 ATP-competitive inhibitors. Its function is as follows. Stress-activated serine/threonine-protein kinase involved in cytokines production, endocytosis, cell migration, chromatin remodeling and transcriptional regulation. Following stress, it is phosphorylated and activated by MAP kinase p38-alpha/MAPK14, leading to phosphorylation of substrates. Phosphorylates serine in the peptide sequence, Hyd-X-R-X(2)-S, where Hyd is a large hydrophobic residue. MAPKAPK2 and MAPKAPK3, share the same function and substrate specificity, but MAPKAPK3 kinase activity and level in protein expression are lower compared to MAPKAPK2. Phosphorylates HSP27/HSPB1, KRT18, KRT20, RCSD1, RPS6KA3, TAB3 and TTP/ZFP36. Mediates phosphorylation of HSP27/HSPB1 in response to stress, leading to dissociate HSP27/HSPB1 from large small heat-shock protein (sHsps) oligomers and impair their chaperone activities and ability to protect against oxidative stress effectively. Involved in inflammatory response by regulating tumor necrosis factor (TNF) and IL6 production post-transcriptionally: acts by phosphorylating AU-rich elements (AREs)-binding proteins, such as TTP/ZFP36, leading to regulate the stability and translation of TNF and IL6 mRNAs. Phosphorylation of TTP/ZFP36, a major post-transcriptional regulator of TNF, promotes its binding to 14-3-3 proteins and reduces its ARE mRNA affinity leading to inhibition of dependent degradation of ARE-containing transcript. Involved in toll-like receptor signaling pathway (TLR) in dendritic cells: required for acute TLR-induced macropinocytosis by phosphorylating and activating RPS6KA3. Also acts as a modulator of Polycomb-mediated repression. The polypeptide is MAP kinase-activated protein kinase 3 (MAPKAPK3) (Homo sapiens (Human)).